The chain runs to 157 residues: Transcription elongation factor GreA (157 aa).

Belongs to the GreA/GreB family.

Functionally, necessary for efficient RNA polymerase transcription elongation past template-encoded arresting sites. The arresting sites in DNA have the property of trapping a certain fraction of elongating RNA polymerases that pass through, resulting in locked ternary complexes. Cleavage of the nascent transcript by cleavage factors such as GreA or GreB allows the resumption of elongation from the new 3'terminus. GreA releases sequences of 2 to 3 nucleotides. This is Transcription elongation factor GreA from Maricaulis maris (strain MCS10) (Caulobacter maris).